A 126-amino-acid polypeptide reads, in one-letter code: Holo-[acyl-carrier-protein] synthase (126 aa).

Residues D9 and E58 each contribute to the Mg(2+) site.

The protein belongs to the P-Pant transferase superfamily. AcpS family. Mg(2+) is required as a cofactor.

It localises to the cytoplasm. It catalyses the reaction apo-[ACP] + CoA = holo-[ACP] + adenosine 3',5'-bisphosphate + H(+). In terms of biological role, transfers the 4'-phosphopantetheine moiety from coenzyme A to a Ser of acyl-carrier-protein. This Yersinia pseudotuberculosis serotype I (strain IP32953) protein is Holo-[acyl-carrier-protein] synthase.